Consider the following 502-residue polypeptide: MRKLRFYNTLTRKKENFTPIDATKVRLYVCGPTIYDYAHIGNARSVIVFDVLFRLLRYVYGNEHVIYVRNITDVDDKINARAACEHPELALNDAIRQLTERTYSQFQQDTMALGCLLPTSQPRATDHLEDMRSLIERLLEKGHAYKVQNHVLFSVRSIRNHPHYGAFAKRSLDEMRAGARVDVAAYKREEMDFVLWKPSAVGEPGWASPAGIPVLGRPGWHIECSAMSMAKLLAPYGGGLTCDDPTANVFDIHGGGIDLIFPHHENEIAQSCSAFGTERMANLWMHNGFLQVEGKKMSKSLGNFITIRSILESDFFEFNGVLTDEMKQNWAGLSARFSMLQTHYREPLNWTAQRLVQSSSELYRWYELLCFEREEMEKNEALDDSVIDALSDDLNTPKALTLLRKFYKAGNAIALANGMNLFGLLRQEWVQEVECPLFMRKISLNSKFIDQRIAERLRLIHNKEWAAADTIRDELAAKGVILKDGKDPQTGERTTMWEMRRL.

C30 is a Zn(2+) binding site. Positions 32 to 42 match the 'HIGH' region motif; that stretch reads PTIYDYAHIGN. Residues C224, H263, and E267 each contribute to the Zn(2+) site. The 'KMSKS' region motif lies at 296–300; the sequence is KMSKS. K299 is an ATP binding site.

It belongs to the class-I aminoacyl-tRNA synthetase family. Monomer. Zn(2+) is required as a cofactor.

The protein localises to the cytoplasm. The enzyme catalyses tRNA(Cys) + L-cysteine + ATP = L-cysteinyl-tRNA(Cys) + AMP + diphosphate. This chain is Cysteine--tRNA ligase, found in Bartonella quintana (strain Toulouse) (Rochalimaea quintana).